A 158-amino-acid polypeptide reads, in one-letter code: Endoribonuclease YbeY (158 aa).

H119, H123, and D129 together coordinate Zn(2+).

Belongs to the endoribonuclease YbeY family. It depends on Zn(2+) as a cofactor.

The protein localises to the cytoplasm. Single strand-specific metallo-endoribonuclease involved in late-stage 70S ribosome quality control and in maturation of the 3' terminus of the 16S rRNA. This Chlamydia caviae (strain ATCC VR-813 / DSM 19441 / 03DC25 / GPIC) (Chlamydophila caviae) protein is Endoribonuclease YbeY.